The primary structure comprises 229 residues: Mannose-specific lectin TAR1 (229 aa).

The first 23 residues, 1-23, serve as a signal peptide directing secretion; that stretch reads MAKLLLFLLPAILGLLIPRSAVA. Bulb-type lectin domains follow at residues 26-131 and 145-229; these read TNYL…PWVP and DNLL…DYVL. Residues 51–55, Y59, W63, Q64, 170–174, Y178, and 182–185 contribute to the beta-D-mannose site; these read QNDCN, QGDCN, and YGWQ. A Carbohydrate-binding motif 1 motif is present at residues 51–59; sequence QNDCNLVLY. Cystine bridges form between C54-C74 and C173-C195. The Carbohydrate-binding motif 2 signature appears at 170–178; the sequence is QGDCNLVLY.

As to quaternary structure, forms heterotetramer of 2 chains 1 and 2 chains 2 arranged as a dimer of chain 1 and chain 2 heterodimers.

The protein localises to the secreted. Functionally, mannose-specific lectin. Shows agglutinating activity towards erythrocytes from rabbit. This chain is Mannose-specific lectin TAR1, found in Colocasia esculenta (Wild taro).